A 55-amino-acid polypeptide reads, in one-letter code: UPF0434 protein BARBAKC583_1098 (55 aa).

Belongs to the UPF0434 family.

The protein is UPF0434 protein BARBAKC583_1098 of Bartonella bacilliformis (strain ATCC 35685 / KC583 / Herrer 020/F12,63).